The sequence spans 396 residues: MGIHGLTKLLGDNAPGCIKETKFENLFGRKVAVDASMHIYQFMVVVGRQGDQLLTNEAGEITSHLQGMFFRTAKMLEAGIKPVYVFDGKPPQLKQDQLAQRTERRADANEALEKAKEAGDQEAIEKYSKRSVRVTREHNDECKRLLRLMGVPVVEAPTEAEAQCAEMAKSGLVYGLATEDMDALTFGAPRVIRHLMAPSSQNVPVQEFDREVALRELELTDDQFIDLCILMGCDYCGTIRGIGAVRALQMIKKHGSIEGMLKELDPAKYPVPEPFPHKESHEFFKNPEVTPSAEIPPLKWTAPDEEGLVQFLVNEKQFNEQRVRNAVGRIKANKTKANQGRLESFFTSLPKPATADKAKPKEDDKKRKAGAAAGGKDAKGGAAAKKGKFGVGGGKK.

Positions 1–105 (MGIHGLTKLL…DQLAQRTERR (105 aa)) are N-domain. A Mg(2+)-binding site is contributed by aspartate 34. Residue arginine 71 participates in DNA binding. Positions 87, 159, 161, 180, and 182 each coordinate Mg(2+). The tract at residues 123-254 (AIEKYSKRSV…VRALQMIKKH (132 aa)) is I-domain. A DNA-binding site is contributed by glutamate 159. Residues glycine 232 and aspartate 234 each coordinate DNA. Position 234 (aspartate 234) interacts with Mg(2+). An interaction with PCNA region spans residues 338–346 (NQGRLESFF). The interval 341–396 (RLESFFTSLPKPATADKAKPKEDDKKRKAGAAAGGKDAKGGAAAKKGKFGVGGGKK) is disordered. Residues 354–366 (TADKAKPKEDDKK) are compositionally biased toward basic and acidic residues. Over residues 370 to 384 (GAAAGGKDAKGGAAA) the composition is skewed to low complexity.

Belongs to the XPG/RAD2 endonuclease family. FEN1 subfamily. Interacts with PCNA. Three molecules of FEN1 bind to one PCNA trimer with each molecule binding to one PCNA monomer. PCNA stimulates the nuclease activity without altering cleavage specificity. The cofactor is Mg(2+). In terms of processing, phosphorylated. Phosphorylation upon DNA damage induces relocalization to the nuclear plasma.

Its subcellular location is the nucleus. The protein resides in the nucleolus. The protein localises to the nucleoplasm. It is found in the mitochondrion. In terms of biological role, structure-specific nuclease with 5'-flap endonuclease and 5'-3' exonuclease activities involved in DNA replication and repair. During DNA replication, cleaves the 5'-overhanging flap structure that is generated by displacement synthesis when DNA polymerase encounters the 5'-end of a downstream Okazaki fragment. It enters the flap from the 5'-end and then tracks to cleave the flap base, leaving a nick for ligation. Also involved in the long patch base excision repair (LP-BER) pathway, by cleaving within the apurinic/apyrimidinic (AP) site-terminated flap. Acts as a genome stabilization factor that prevents flaps from equilibrating into structures that lead to duplications and deletions. Also possesses 5'-3' exonuclease activity on nicked or gapped double-stranded DNA, and exhibits RNase H activity. Also involved in replication and repair of rDNA and in repairing mitochondrial DNA. In Chlamydomonas reinhardtii (Chlamydomonas smithii), this protein is Flap endonuclease 1.